The following is a 425-amino-acid chain: Serine--tRNA ligase (425 aa).

233-235 (TAE) lines the L-serine pocket. Position 264–266 (264–266 (RAE)) interacts with ATP. Glutamate 287 contributes to the L-serine binding site. 351-354 (EISS) contacts ATP. L-serine is bound at residue serine 387.

The protein belongs to the class-II aminoacyl-tRNA synthetase family. Type-1 seryl-tRNA synthetase subfamily. Homodimer. The tRNA molecule binds across the dimer.

Its subcellular location is the cytoplasm. It carries out the reaction tRNA(Ser) + L-serine + ATP = L-seryl-tRNA(Ser) + AMP + diphosphate + H(+). The enzyme catalyses tRNA(Sec) + L-serine + ATP = L-seryl-tRNA(Sec) + AMP + diphosphate + H(+). The protein operates within aminoacyl-tRNA biosynthesis; selenocysteinyl-tRNA(Sec) biosynthesis; L-seryl-tRNA(Sec) from L-serine and tRNA(Sec): step 1/1. Functionally, catalyzes the attachment of serine to tRNA(Ser). Is also able to aminoacylate tRNA(Sec) with serine, to form the misacylated tRNA L-seryl-tRNA(Sec), which will be further converted into selenocysteinyl-tRNA(Sec). The protein is Serine--tRNA ligase of Clostridium botulinum (strain Eklund 17B / Type B).